Consider the following 525-residue polypeptide: Protein disulfide-isomerase A2 (525 aa).

Residues 1-21 (MSRQLLPVLLLLLLRASCPWG) form the signal peptide. In terms of domain architecture, Thioredoxin 1 spans 27–152 (RSPSEEPPEE…IAEWLRRRVG (126 aa)). Residues Cys71 and Cys74 each act as nucleophile in the active site. Residues Cys71 and Cys74 are joined by a disulfide bond. N-linked (GlcNAc...) asparagine glycans are attached at residues Asn127 and Asn284. Residues 367–496 (VLNGQVKPYL…FSKFLDNGGV (130 aa)) enclose the Thioredoxin 2 domain. Residues Cys418 and Cys421 each act as nucleophile in the active site. A disulfide bridge connects residues Cys418 and Cys421. Positions 492-525 (DNGGVLPTEEPPEEPAAPFPEPPANSTMGSKEEL) are disordered. The span at 505 to 514 (EPAAPFPEPP) shows a compositional bias: pro residues. The N-linked (GlcNAc...) asparagine glycan is linked to Asn516. The span at 516-525 (NSTMGSKEEL) shows a compositional bias: polar residues. Positions 522–525 (KEEL) match the Prevents secretion from ER motif.

The protein belongs to the protein disulfide isomerase family. As to quaternary structure, monomer; predominantly as monomer under reducing conditions. Homodimer; disulfide-linked. Part of a large chaperone multiprotein complex comprising DNAJB11, HSP90B1, HSPA5, HYOU, PDIA2, PDIA4, PDIA6, PPIB, SDF2L1, UGGT1 and very small amounts of ERP29, but not, or at very low levels, CALR nor CANX. Post-translationally, the disulfide-linked homodimer exhibits an enhanced chaperone activity. Glycosylated. As to expression, highly expressed in pancreas (at protein level).

It localises to the endoplasmic reticulum lumen. It catalyses the reaction Catalyzes the rearrangement of -S-S- bonds in proteins.. Acts as an intracellular estrogen-binding protein. May be involved in modulating cellular levels and biological functions of estrogens in the pancreas. May act as a chaperone that inhibits aggregation of misfolded proteins. The sequence is that of Protein disulfide-isomerase A2 (PDIA2) from Homo sapiens (Human).